The primary structure comprises 317 residues: MNQLDALRQYTTVVADTGDFHQLAQFQPRDATTNPSLILKAVQKPEYAPLMRATVAQYKGRSLDEVMDRMLVRFGCEILNTIPGRVSTEVDARLSFNTSATVARAERLIELYQAEGVHIDRVLIKIASTWEGIEAARQLELRGIHTNLTLLFSFCQAVACGQAKVQLISPFVGRIYDWYKKQAGAQWDEAAMAGANDPGVRSVRAIYEHYKHFGIATEVMGASFRNTGQIVALAGCDLLTIAPELLAQLGASDAPLSRALDPEAARTLELDPVHYDEAGFRLALNEDAMGTEKLAEGIRAFAADTRKLEALMQQAAD.

K125 functions as the Schiff-base intermediate with substrate in the catalytic mechanism.

This sequence belongs to the transaldolase family. Type 1 subfamily. Homodimer.

It is found in the cytoplasm. It carries out the reaction D-sedoheptulose 7-phosphate + D-glyceraldehyde 3-phosphate = D-erythrose 4-phosphate + beta-D-fructose 6-phosphate. It participates in carbohydrate degradation; pentose phosphate pathway; D-glyceraldehyde 3-phosphate and beta-D-fructose 6-phosphate from D-ribose 5-phosphate and D-xylulose 5-phosphate (non-oxidative stage): step 2/3. Its function is as follows. Transaldolase is important for the balance of metabolites in the pentose-phosphate pathway. This Delftia acidovorans (strain DSM 14801 / SPH-1) protein is Transaldolase.